The chain runs to 341 residues: UDP-glucose 4-epimerase (341 aa).

Belongs to the polysaccharide synthase family.

It carries out the reaction UDP-alpha-D-glucose = UDP-alpha-D-galactose. Functionally, epimerizes UDP-galactose to UDP-glucose. The sequence is that of UDP-glucose 4-epimerase (capD) from Rickettsia canadensis (strain McKiel).